The sequence spans 367 residues: MQLYLSRLLLIVTRTALRVTGVFFWVLVYVAALLAAVSYIPDALRLLTRGPLSAFRWGPRKAAPACLTSSAHGQHGYIRMKDSGIRFHYVASGDKRNPLMLLLHGFPENWYSWRYQLDEFSNGYRTVAIDLRGFGGSDAPSRLEDYKMEILLQDLQDLIRGLGYSRCVLVGHDWGGTLAWTFAVRHRDMVTHLIVMNAPHPSAFHDYVLSHPSQLFSSRYVFLFQLPLIPEILLSLRDFEHIKKPLTDATHGIQNVECKLSKEEVEAFVYYPSQKGALTPPLNYYRNLFGFFPVKAQDVLVPTLLLWGEHDAFLEAAMVPEMQQYVRAPFRAEIIPNASHWLQQDRPQEVNKIIRDFLKEDFLVHRN.

The chain crosses the membrane as a helical span at residues glycine 21–proline 41. Residue aspartate 173 is the Nucleophile of the active site. Tyrosine 285 serves as the catalytic Proton donor. Histidine 340 serves as the catalytic Proton acceptor.

Belongs to the AB hydrolase superfamily. Epoxide hydrolase family.

It is found in the microsome membrane. The enzyme catalyses an epoxide + H2O = an ethanediol. It carries out the reaction 9,10-epoxyoctadecanoate + H2O = 9,10-dihydroxyoctadecanoate. It catalyses the reaction 9,10-epoxy-(12Z)-octadecenoate + H2O = 9,10-dihydroxy-(12Z)-octadecenoate. The catalysed reaction is 8,9-epoxy-(5Z,11Z,14Z)-eicosatrienoate + H2O = 8,9-dihydroxy-(5Z,11Z,14Z)-eicosatrienoate. The enzyme catalyses 11,12-epoxy-(5Z,8Z,14Z)-eicosatrienoate + H2O = 11,12-dihydroxy-(5Z,8Z,14Z)-eicosatrienoate. It carries out the reaction 14,15-epoxy-(5Z,8Z,11Z)-eicosatrienoate + H2O = 14,15-dihydroxy-(5Z,8Z,11Z)-eicosatrienoate. Its activity is regulated as follows. Inhibited by 1-(1-acetylpiperidin-4-yl)-3-(4-(trifl uoromethoxy)phenyl)urea (TPAU), 1-cyclohexyl-3-dodecylurea (CDU), 12-(3-adamantan-1-yl-ureido)-dodecanoic acid (AUDA), 1-((3S, 5S, 7S)-adamantan-1-yl)-3-(5-(2-(2-ethoxyethoxy) ethoxy)pentyl)urea (AEPU) and to a lesser extent by 8-(3-((3S, 5S, 7S)-adamantan-1-yl)ureido) octanoic acid (AUOA). Functionally, catalyzes the hydrolysis of epoxide-containing fatty acids. Active in vitro against epoxyeicosatrienoic acids (EETs) including 8,9-EET, 9,10-EET, 11,12-EET and 14,15-EET and leukotoxin. The chain is Epoxide hydrolase 3 (ephx3) from Xenopus tropicalis (Western clawed frog).